An 84-amino-acid chain; its full sequence is MSSGGLLLLLGLLTLWAELTPISGQDRPKFCHLPVDSGICRAHIPRFYYNPASNQCQGFIYGGCGGNANNFETRDQCRHTCGGK.

The N-terminal stretch at 1 to 24 is a signal peptide; that stretch reads MSSGGLLLLLGLLTLWAELTPISG. Glutamine 25 carries the pyrrolidone carboxylic acid modification. Residues 31 to 81 enclose the BPTI/Kunitz inhibitor domain; the sequence is CHLPVDSGICRAHIPRFYYNPASNQCQGFIYGGCGGNANNFETRDQCRHTC. 3 cysteine pairs are disulfide-bonded: cysteine 31/cysteine 81, cysteine 40/cysteine 64, and cysteine 56/cysteine 77.

It belongs to the venom Kunitz-type family. As to expression, expressed by the venom gland.

It localises to the secreted. In terms of biological role, serine protease inhibitor. The sequence is that of Kunitz-type serine protease inhibitor 4 from Daboia russelii (Russel's viper).